Consider the following 168-residue polypeptide: MLSKIERLILANQYKILKILENTSEYDEIIKILEEGYEIFYDEILGHIFDELPESEGQFVLDILSFYDIVVEPYKQKNPNDHEIINHPYSYFKGFDGNSETKYMAFVRFLIEDQKKFSFVAKYAKKTDNFNSHFPMLDKYRKMVELWESKYNKKYDLKREEILDILNA.

It belongs to the UPF0304 family.

This chain is UPF0304 protein MJECS11, found in Methanocaldococcus jannaschii (strain ATCC 43067 / DSM 2661 / JAL-1 / JCM 10045 / NBRC 100440) (Methanococcus jannaschii).